Consider the following 229-residue polypeptide: Protein rep (229 aa).

Y214 is a DNA binding site.

It belongs to the Gram-positive plasmids replication protein type 1 family.

Its function is as follows. Produces a single-strand nick in a specific site of the plasmid, and this nick results in single-strand replication by rolling circle mechanism. The polypeptide is Protein rep (Staphylococcus aureus).